We begin with the raw amino-acid sequence, 687 residues long: UvrABC system protein B (687 aa).

One can recognise a Helicase ATP-binding domain in the interval 26 to 414 (EGLAAGEMYQ…GAVIEQVVRP (389 aa)). ATP is bound at residue 39–46 (GVTGSGKT). The short motif at 92-115 (YYDYYQPEAYVPASDTYIGKDASV) is the Beta-hairpin element. A Helicase C-terminal domain is found at 430 to 596 (QVDDLLSEIR…GIQKAVREII (167 aa)). The region spanning 630-665 (AKRLQQLERQMHKHAQNLEFEQAARLRDEIKRIKGW) is the UVR domain.

The protein belongs to the UvrB family. Forms a heterotetramer with UvrA during the search for lesions. Interacts with UvrC in an incision complex.

Its subcellular location is the cytoplasm. The UvrABC repair system catalyzes the recognition and processing of DNA lesions. A damage recognition complex composed of 2 UvrA and 2 UvrB subunits scans DNA for abnormalities. Upon binding of the UvrA(2)B(2) complex to a putative damaged site, the DNA wraps around one UvrB monomer. DNA wrap is dependent on ATP binding by UvrB and probably causes local melting of the DNA helix, facilitating insertion of UvrB beta-hairpin between the DNA strands. Then UvrB probes one DNA strand for the presence of a lesion. If a lesion is found the UvrA subunits dissociate and the UvrB-DNA preincision complex is formed. This complex is subsequently bound by UvrC and the second UvrB is released. If no lesion is found, the DNA wraps around the other UvrB subunit that will check the other stand for damage. This Nitrosococcus oceani (strain ATCC 19707 / BCRC 17464 / JCM 30415 / NCIMB 11848 / C-107) protein is UvrABC system protein B.